Consider the following 308-residue polypeptide: Coenzyme PQQ synthesis protein B (308 aa).

Belongs to the PqqB family.

It participates in cofactor biosynthesis; pyrroloquinoline quinone biosynthesis. Functionally, may be involved in the transport of PQQ or its precursor to the periplasm. This Rhodopseudomonas palustris (strain TIE-1) protein is Coenzyme PQQ synthesis protein B.